The primary structure comprises 502 residues: Lysine--tRNA ligase (502 aa).

Residues E398 and E405 each contribute to the Mg(2+) site.

The protein belongs to the class-II aminoacyl-tRNA synthetase family. As to quaternary structure, homodimer. It depends on Mg(2+) as a cofactor.

It localises to the cytoplasm. It catalyses the reaction tRNA(Lys) + L-lysine + ATP = L-lysyl-tRNA(Lys) + AMP + diphosphate. The polypeptide is Lysine--tRNA ligase (Thermosipho melanesiensis (strain DSM 12029 / CIP 104789 / BI429)).